The sequence spans 1225 residues: DNA-directed RNA polymerase subunit beta' (1225 aa).

Cysteine 60, cysteine 62, cysteine 75, and cysteine 78 together coordinate Zn(2+). Mg(2+) is bound by residues aspartate 450, aspartate 452, and aspartate 454. Residues cysteine 818, cysteine 892, cysteine 899, and cysteine 902 each contribute to the Zn(2+) site.

It belongs to the RNA polymerase beta' chain family. The RNAP catalytic core consists of 2 alpha, 1 beta, 1 beta' and 1 omega subunit. When a sigma factor is associated with the core the holoenzyme is formed, which can initiate transcription. Requires Mg(2+) as cofactor. The cofactor is Zn(2+).

It catalyses the reaction RNA(n) + a ribonucleoside 5'-triphosphate = RNA(n+1) + diphosphate. In terms of biological role, DNA-dependent RNA polymerase catalyzes the transcription of DNA into RNA using the four ribonucleoside triphosphates as substrates. The polypeptide is DNA-directed RNA polymerase subunit beta' (Streptococcus pneumoniae (strain ATCC BAA-255 / R6)).